The chain runs to 70 residues: ATP synthase subunit c (70 aa).

A run of 2 helical transmembrane segments spans residues isoleucine 4–isoleucine 24 and isoleucine 45–phenylalanine 65.

Belongs to the ATPase C chain family. In terms of assembly, F-type ATPases have 2 components, F(1) - the catalytic core - and F(0) - the membrane proton channel. F(1) has five subunits: alpha(3), beta(3), gamma(1), delta(1), epsilon(1). F(0) has three main subunits: a(1), b(2) and c(10-14). The alpha and beta chains form an alternating ring which encloses part of the gamma chain. F(1) is attached to F(0) by a central stalk formed by the gamma and epsilon chains, while a peripheral stalk is formed by the delta and b chains.

Its subcellular location is the cell membrane. In terms of biological role, f(1)F(0) ATP synthase produces ATP from ADP in the presence of a proton or sodium gradient. F-type ATPases consist of two structural domains, F(1) containing the extramembraneous catalytic core and F(0) containing the membrane proton channel, linked together by a central stalk and a peripheral stalk. During catalysis, ATP synthesis in the catalytic domain of F(1) is coupled via a rotary mechanism of the central stalk subunits to proton translocation. Key component of the F(0) channel; it plays a direct role in translocation across the membrane. A homomeric c-ring of between 10-14 subunits forms the central stalk rotor element with the F(1) delta and epsilon subunits. This is ATP synthase subunit c from Staphylococcus haemolyticus (strain JCSC1435).